Reading from the N-terminus, the 864-residue chain is Leucine--tRNA ligase (864 aa).

A 'HIGH' region motif is present at residues 42–52 (PYPSGKLHMGH). The 'KMSKS' region motif lies at 622 to 626 (KMSKS). ATP is bound at residue lysine 625.

It belongs to the class-I aminoacyl-tRNA synthetase family.

The protein localises to the cytoplasm. The catalysed reaction is tRNA(Leu) + L-leucine + ATP = L-leucyl-tRNA(Leu) + AMP + diphosphate. The polypeptide is Leucine--tRNA ligase (Cellvibrio japonicus (strain Ueda107) (Pseudomonas fluorescens subsp. cellulosa)).